The following is a 171-amino-acid chain: Small ribosomal subunit protein uS5 (171 aa).

The 64-residue stretch at 15-78 (YEEKVVKIKR…EKAKKQLIRI (64 aa)) folds into the S5 DRBM domain.

This sequence belongs to the universal ribosomal protein uS5 family. Part of the 30S ribosomal subunit. Contacts proteins S4 and S8.

Its function is as follows. With S4 and S12 plays an important role in translational accuracy. Functionally, located at the back of the 30S subunit body where it stabilizes the conformation of the head with respect to the body. In Phytoplasma australiense, this protein is Small ribosomal subunit protein uS5.